A 522-amino-acid polypeptide reads, in one-letter code: Transactivator/viroplasmin protein (522 aa).

Residues 487–500 (KDASTDRGTTDKDG) show a composition bias toward basic and acidic residues. Residues 487–522 (KDASTDRGTTDKDGPPPTRSIVEKEDVPTTSSKQVD) form a disordered region.

Belongs to the caulimoviridae viroplasmin family.

The protein localises to the host cytoplasm. Its function is as follows. Enhances the ribosomal termination-reinitiation event leading to the translation of major open reading frames on the polycistronic viral RNAs. This chain is Transactivator/viroplasmin protein, found in Arabidopsis thaliana (Mouse-ear cress).